The chain runs to 120 residues: Small ribosomal subunit protein bS6 (120 aa).

This sequence belongs to the bacterial ribosomal protein bS6 family.

Binds together with bS18 to 16S ribosomal RNA. The protein is Small ribosomal subunit protein bS6 of Blochmanniella floridana.